We begin with the raw amino-acid sequence, 150 residues long: Small ribosomal subunit protein eS19S (150 aa).

This sequence belongs to the eukaryotic ribosomal protein eS19 family.

In Ascaris suum (Pig roundworm), this protein is Small ribosomal subunit protein eS19S (RPS19S).